A 282-amino-acid chain; its full sequence is Undecaprenyl-diphosphatase (282 aa).

The next 6 membrane-spanning stretches (helical) occupy residues 51–71 (TLVAVLLYFWKDIFIIVAAVI), 87–107 (MGWMIVAGTIPIVIFGKLFET), 115–135 (SLYWISGSLIGLAIILFLAEG), 191–211 (ATAARFSFLLSLPAVFAAGLY), 229–249 (NILVATLVAGIVGYASIAFLL), and 259–279 (IFIAYRLVAGTAILYLVATGV).

It belongs to the UppP family.

The protein resides in the cell inner membrane. The enzyme catalyses di-trans,octa-cis-undecaprenyl diphosphate + H2O = di-trans,octa-cis-undecaprenyl phosphate + phosphate + H(+). Its function is as follows. Catalyzes the dephosphorylation of undecaprenyl diphosphate (UPP). Confers resistance to bacitracin. The chain is Undecaprenyl-diphosphatase from Pelodictyon phaeoclathratiforme (strain DSM 5477 / BU-1).